The chain runs to 881 residues: MAAVDSTDRRDFIVNINGQESGAVGATGSSSNAEGGNIWKESSYDFWDGEKGKNDKKGDDEDEDGGSFHFRQRGERRHSSAELSDPPSKLIGQFLHKQRASGDEISLDVELNMAELQSNTPPRPATASNTPRRGLTTISESSSPVKTKVKADAVRRRQNRTSLGGSSDEEGRNRDEAEVLKCGSKKPMLSRNKTKSRLQDPPTPTHPAIDKTEMKSGRRSGIFKSGFLGKSPKAGTPGRNGFEEEEEEDPFLDEDLPEEFKRDKLSFWVFLEWISLVLIVTSLVCSLTIHNLQRKTWWKLDLWKWEVTVLVLICGRLVSSWIVRIIVFLVEKNFTWRKRVLYFVYGVRKSVQNCLWLGLVLLAWHFLFDKKVERETRSTALRYVTRVLVCLLVALIIWLVKTILVKVLASSFHMSTYFDRIQESLFTQYVIETLSGPPLMEIQRMEEEEQQVAEDVKSLEKLAGAKLPPALKATVKSFMKVGKSPGLNRIGSKRGEDGEGIRIDQLKRMNTKNVSAWNMKRLMNIILKGAISTLDQNMQDTTQEDEDATHIRSEYEAKCAARKIFHNVTEPGSRYIYLEDFLRFLCEEEAERAMALFEGASESDKISKSCLKNWVVKAFRERRALALTLNDTKTAVDRLHRIINVVIGIIIIIIWLLILGIATTRFLLVLSSQLLLVAFVFGNSCKTIFEAIIFLFVMHPFDVGDRCEIDGVQLVVEEMNILTTVFLRYDNQKIIYPNSVLGTKPIANYYRSPDMGDAVEFCVHIATPPEKITAIKQRILSYVDNKKDYWYPAPMIVFLSMDDLNSVKIAVWLTHRMNHQDMGERYIRRGLLLEEVGKTCRELDIEYRLYPLNINVRSLPPTANPTSSDRIPPSWMQQRGP.

Composition is skewed to basic and acidic residues over residues 1–12 (MAAVDSTDRRDF) and 48–59 (DGEKGKNDKKGD). Residues 1 to 248 (MAAVDSTDRR…RNGFEEEEEE (248 aa)) are disordered. The segment covering 115–145 (ELQSNTPPRPATASNTPRRGLTTISESSSPV) has biased composition (polar residues). Positions 169-179 (EEGRNRDEAEV) are enriched in basic and acidic residues. The residue at position 231 (S231) is a Phosphoserine. The next 6 membrane-spanning stretches (helical) occupy residues 265–285 (LSFW…SLVC), 309–329 (VLVL…IVFL), 349–369 (KSVQ…FLFD), 387–407 (VLVC…LVKV), 642–662 (IINV…LGIA), and 677–697 (VAFV…FLFV). The interval 861-881 (PTANPTSSDRIPPSWMQQRGP) is disordered. Over residues 864–881 (NPTSSDRIPPSWMQQRGP) the composition is skewed to polar residues.

This sequence belongs to the MscS (TC 1.A.23) family.

It localises to the membrane. In terms of biological role, mechanosensitive channel that opens in response to stretch forces in the membrane lipid bilayer. The chain is Mechanosensitive ion channel protein 5 (MSL5) from Arabidopsis thaliana (Mouse-ear cress).